Consider the following 113-residue polypeptide: Cell cycle control protein 50C (113 aa).

The Cytoplasmic segment spans residues 1–34 (MEERAQHCLSRLLDNSALKQQELPIHRLYFTARR). A helical transmembrane segment spans residues 35–55 (VLFVFFATGIFCLCMGIILIL). Residues 56–113 (SARSTQEIEINYTRICANCAKLRENASNFDKECTCSIPFYLSGKMMVGEIQETRLTLH) lie on the Extracellular side of the membrane. Asparagine 66 carries N-linked (GlcNAc...) asparagine glycosylation.

This sequence belongs to the CDC50/LEM3 family. As to expression, specifically expressed in testis.

The protein resides in the membrane. The polypeptide is Cell cycle control protein 50C (Homo sapiens (Human)).